The primary structure comprises 727 residues: Catalase-peroxidase (727 aa).

The interval 1–21 (MDAKVEDNIAGKCPMGHGRGP) is disordered. Residues 95-217 (WHAAGTYRIT…LGAVQMGLIY (123 aa)) constitute a cross-link (tryptophyl-tyrosyl-methioninium (Trp-Tyr) (with M-243)). The active-site Proton acceptor is the H96. Positions 217–243 (YVNPEGPNGNPDPLASARDIRETFARM) form a cross-link, tryptophyl-tyrosyl-methioninium (Tyr-Met) (with W-95). H258 contributes to the heme b binding site.

Belongs to the peroxidase family. Peroxidase/catalase subfamily. As to quaternary structure, homodimer or homotetramer. Heme b serves as cofactor. In terms of processing, formation of the three residue Trp-Tyr-Met cross-link is important for the catalase, but not the peroxidase activity of the enzyme.

The enzyme catalyses H2O2 + AH2 = A + 2 H2O. It carries out the reaction 2 H2O2 = O2 + 2 H2O. Functionally, bifunctional enzyme with both catalase and broad-spectrum peroxidase activity. Important for stationary phase survival. This chain is Catalase-peroxidase, found in Caulobacter vibrioides (strain ATCC 19089 / CIP 103742 / CB 15) (Caulobacter crescentus).